The sequence spans 290 residues: MSAVTPALVKELRDRTGLGMMECKKALGDANGDIELAIENLRKVSGLKAAKKEGRTAADGVVAVKVAADNSYGVAVEVNSETDFVARDAGFLAFVNSVVEKAFAAKQTDVAAVMAGELEIAREALVQKIGEKISVRRINLVEGGVVGGYVHLNNRIAVLVQLEGGSEDVAKDVAMHVAAVNPQVVSADQMPADVVEKEKEIIRAQPDMAGKPAEIVEKMIVGRISKFLKEASLVDQPFVKNPEQTVAQFAKAGGATVKSFVRLEVGEGIEVAVVDFAAEVAAQVAASAKS.

The involved in Mg(2+) ion dislocation from EF-Tu stretch occupies residues 82–85 (TDFV).

Belongs to the EF-Ts family.

It is found in the cytoplasm. Associates with the EF-Tu.GDP complex and induces the exchange of GDP to GTP. It remains bound to the aminoacyl-tRNA.EF-Tu.GTP complex up to the GTP hydrolysis stage on the ribosome. The sequence is that of Elongation factor Ts from Cellvibrio japonicus (strain Ueda107) (Pseudomonas fluorescens subsp. cellulosa).